Here is a 121-residue protein sequence, read N- to C-terminus: Phosphoribosyl-ATP pyrophosphatase (121 aa).

Belongs to the PRA-PH family.

It is found in the cytoplasm. The catalysed reaction is 1-(5-phospho-beta-D-ribosyl)-ATP + H2O = 1-(5-phospho-beta-D-ribosyl)-5'-AMP + diphosphate + H(+). The protein operates within amino-acid biosynthesis; L-histidine biosynthesis; L-histidine from 5-phospho-alpha-D-ribose 1-diphosphate: step 2/9. The polypeptide is Phosphoribosyl-ATP pyrophosphatase (Burkholderia cenocepacia (strain ATCC BAA-245 / DSM 16553 / LMG 16656 / NCTC 13227 / J2315 / CF5610) (Burkholderia cepacia (strain J2315))).